Here is a 329-residue protein sequence, read N- to C-terminus: Fructose-1,6-bisphosphatase class 1 2 (329 aa).

Residues Glu-92, Asp-111, Leu-113, and Asp-114 each contribute to the Mg(2+) site. Substrate is bound by residues 114-117 (DGSS) and Asn-206. Residue Glu-278 participates in Mg(2+) binding.

It belongs to the FBPase class 1 family. In terms of assembly, homotetramer. It depends on Mg(2+) as a cofactor.

Its subcellular location is the cytoplasm. It catalyses the reaction beta-D-fructose 1,6-bisphosphate + H2O = beta-D-fructose 6-phosphate + phosphate. It participates in carbohydrate biosynthesis; gluconeogenesis. The protein is Fructose-1,6-bisphosphatase class 1 2 of Xanthobacter autotrophicus (strain ATCC BAA-1158 / Py2).